The chain runs to 154 residues: Interleukin-2 (154 aa).

The N-terminal stretch at 1–20 (MYRMQLLSCIALSLALVTNS) is a signal peptide. Residue Thr-23 is glycosylated (O-linked (GalNAc...) threonine). The cysteines at positions 78 and 126 are disulfide-linked.

The protein belongs to the IL-2 family.

The protein localises to the secreted. Functionally, cytokine produced by activated CD4-positive helper T-cells and to a lesser extend activated CD8-positive T-cells and natural killer (NK) cells that plays pivotal roles in the immune response and tolerance. Binds to a receptor complex composed of either the high-affinity trimeric IL-2R (IL2RA/CD25, IL2RB/CD122 and IL2RG/CD132) or the low-affinity dimeric IL-2R (IL2RB and IL2RG). Interaction with the receptor leads to oligomerization and conformation changes in the IL-2R subunits resulting in downstream signaling starting with phosphorylation of JAK1 and JAK3. In turn, JAK1 and JAK3 phosphorylate the receptor to form a docking site leading to the phosphorylation of several substrates including STAT5. This process leads to activation of several pathways including STAT, phosphoinositide-3-kinase/PI3K and mitogen-activated protein kinase/MAPK pathways. Functions as a T-cell growth factor and can increase NK-cell cytolytic activity as well. Promotes strong proliferation of activated B-cells and subsequently immunoglobulin production. Plays a pivotal role in regulating the adaptive immune system by controlling the survival and proliferation of regulatory T-cells, which are required for the maintenance of immune tolerance. Moreover, participates in the differentiation and homeostasis of effector T-cell subsets, including Th1, Th2, Th17 as well as memory CD8-positive T-cells. In Cercocebus atys (Sooty mangabey), this protein is Interleukin-2 (IL2).